Reading from the N-terminus, the 87-residue chain is MQRNFRKTFVGKVVSDKMDKTITVIVDIYKKDPLYGKRVKQSKKFHVHDENQEAKPGDLVNFMETRPLSKTKRFRLFKILYHSKSAN.

Belongs to the universal ribosomal protein uS17 family. Part of the 30S ribosomal subunit.

One of the primary rRNA binding proteins, it binds specifically to the 5'-end of 16S ribosomal RNA. The chain is Small ribosomal subunit protein uS17 from Aster yellows witches'-broom phytoplasma (strain AYWB).